The sequence spans 56 residues: Large ribosomal subunit protein bL33 (56 aa).

This sequence belongs to the bacterial ribosomal protein bL33 family.

The chain is Large ribosomal subunit protein bL33 from Rickettsia bellii (strain OSU 85-389).